Consider the following 133-residue polypeptide: Cytochrome c-type biogenesis protein CcmE (133 aa).

The Cytoplasmic portion of the chain corresponds to 1 to 7; the sequence is MKKKHKR. Residues 8–28 form a helical; Signal-anchor for type II membrane protein membrane-spanning segment; the sequence is LLITSGIFCFLSCIVFFILTT. Over 29–133 the chain is Periplasmic; that stretch reads LKENISFFYT…YMPKVLKQIP (105 aa). Heme is bound by residues histidine 120 and tyrosine 124.

The protein belongs to the CcmE/CycJ family.

It is found in the cell inner membrane. Its function is as follows. Heme chaperone required for the biogenesis of c-type cytochromes. Transiently binds heme delivered by CcmC and transfers the heme to apo-cytochromes in a process facilitated by CcmF and CcmH. This Wolbachia sp. subsp. Drosophila simulans (strain wRi) protein is Cytochrome c-type biogenesis protein CcmE.